We begin with the raw amino-acid sequence, 97 residues long: Large ribosomal subunit protein bL25 (97 aa).

It belongs to the bacterial ribosomal protein bL25 family. Part of the 50S ribosomal subunit; part of the 5S rRNA/L5/L18/L25 subcomplex. Contacts the 5S rRNA. Binds to the 5S rRNA independently of L5 and L18.

Functionally, this is one of the proteins that binds to the 5S RNA in the ribosome where it forms part of the central protuberance. This is Large ribosomal subunit protein bL25 from Buchnera aphidicola subsp. Baizongia pistaciae (strain Bp).